A 1202-amino-acid polypeptide reads, in one-letter code: Probable DNA polymerase (1202 aa).

It belongs to the DNA polymerase type-B family.

Its subcellular location is the mitochondrion. It catalyses the reaction DNA(n) + a 2'-deoxyribonucleoside 5'-triphosphate = DNA(n+1) + diphosphate. This chain is Probable DNA polymerase, found in Ascobolus immersus.